A 308-amino-acid chain; its full sequence is D-alanine--D-alanine ligase (308 aa).

The 200-residue stretch at 106–305 (KMLWKAFGLP…FEQLVVKILE (200 aa)) folds into the ATP-grasp domain. 136–191 (VEKLGLPLMVKPSLEGSSVGLTKVNAIDDLKSAVEFALQYDETVLIEEWLSGDELT) contributes to the ATP binding site. 3 residues coordinate Mg(2+): Asp-259, Glu-272, and Asn-274.

Belongs to the D-alanine--D-alanine ligase family. Mg(2+) serves as cofactor. The cofactor is Mn(2+).

The protein resides in the cytoplasm. It carries out the reaction 2 D-alanine + ATP = D-alanyl-D-alanine + ADP + phosphate + H(+). Its pathway is cell wall biogenesis; peptidoglycan biosynthesis. Cell wall formation. The chain is D-alanine--D-alanine ligase from Histophilus somni (strain 2336) (Haemophilus somnus).